A 398-amino-acid polypeptide reads, in one-letter code: RNA exonuclease 3 (398 aa).

One can recognise an Exonuclease domain in the interval 239-385 (VLALDCEMGF…QDAIAAMDII (147 aa)).

The protein belongs to the REXO1/REXO3 family.

It localises to the cytoplasm. Its subcellular location is the nucleus. 3' to 5' exoribonuclease required for proper 3' end maturation of MRP RNA and of the U5L snRNA. In Candida glabrata (strain ATCC 2001 / BCRC 20586 / JCM 3761 / NBRC 0622 / NRRL Y-65 / CBS 138) (Yeast), this protein is RNA exonuclease 3 (REX3).